A 519-amino-acid polypeptide reads, in one-letter code: AAA-ATPase At4g30250 (519 aa).

An N-terminal signal peptide occupies residues 1-24 (MSDYWTTMASLLGMLAFCQTIVQL). 252-259 (GPPGTGKS) serves as a coordination point for ATP. Disordered regions lie at residues 315–335 (GKNKKKNGSYEYDPGLTNGSG) and 467–519 (KSVG…EKEK). Residues 479–488 (QEEEEEAEEE) show a composition bias toward acidic residues. The span at 489 to 508 (QEKRALDSPNRRNREVCGFR) shows a compositional bias: basic and acidic residues. A compositionally biased stretch (acidic residues) spans 509 to 519 (EEEEEEDEKEK).

Belongs to the AAA ATPase family. BCS1 subfamily. The cofactor is Mg(2+).

It carries out the reaction ATP + H2O = ADP + phosphate + H(+). In Arabidopsis thaliana (Mouse-ear cress), this protein is AAA-ATPase At4g30250.